The chain runs to 340 residues: Protein RecA (340 aa).

An ATP-binding site is contributed by 66-73; it reads GPESSGKT.

This sequence belongs to the RecA family.

The protein localises to the cytoplasm. Its function is as follows. Can catalyze the hydrolysis of ATP in the presence of single-stranded DNA, the ATP-dependent uptake of single-stranded DNA by duplex DNA, and the ATP-dependent hybridization of homologous single-stranded DNAs. It interacts with LexA causing its activation and leading to its autocatalytic cleavage. The polypeptide is Protein RecA (Rickettsia prowazekii (strain Madrid E)).